Reading from the N-terminus, the 264-residue chain is tRNA (guanine-N(1)-)-methyltransferase (264 aa).

S-adenosyl-L-methionine is bound by residues Gly125 and 145-150 (LGDFVL).

It belongs to the RNA methyltransferase TrmD family. In terms of assembly, homodimer.

It is found in the cytoplasm. The catalysed reaction is guanosine(37) in tRNA + S-adenosyl-L-methionine = N(1)-methylguanosine(37) in tRNA + S-adenosyl-L-homocysteine + H(+). Its function is as follows. Specifically methylates guanosine-37 in various tRNAs. This Burkholderia lata (strain ATCC 17760 / DSM 23089 / LMG 22485 / NCIMB 9086 / R18194 / 383) protein is tRNA (guanine-N(1)-)-methyltransferase.